We begin with the raw amino-acid sequence, 284 residues long: Aldo-keto reductase MAV_3816 (284 aa).

Residue tyrosine 59 is the Proton donor of the active site. NADPH is bound by residues leucine 199, isoleucine 237, arginine 239, serine 240, alanine 241, serine 248, and arginine 275.

This sequence belongs to the aldo/keto reductase family.

In Mycobacterium avium (strain 104), this protein is Aldo-keto reductase MAV_3816.